Consider the following 147-residue polypeptide: Siroheme decarboxylase NirG subunit (147 aa).

Belongs to the Ahb/Nir family. As to quaternary structure, probably forms a complex composed of NirD, NirL, NirG and NirH. All proteins are required for the total conversion of siroheme to didecarboxysiroheme.

It catalyses the reaction siroheme + 2 H(+) = 12,18-didecarboxysiroheme + 2 CO2. It functions in the pathway porphyrin-containing compound metabolism. In terms of biological role, involved in heme d1 biosynthesis. Catalyzes the decarboxylation of siroheme into didecarboxysiroheme. The chain is Siroheme decarboxylase NirG subunit from Stutzerimonas stutzeri (Pseudomonas stutzeri).